We begin with the raw amino-acid sequence, 373 residues long: Spermidine/putrescine import ATP-binding protein PotA (373 aa).

The ABC transporter domain maps to 5 to 235; the sequence is IVFEHVSKKF…PKSSFVADFI (231 aa). 37-44 is a binding site for ATP; it reads GPSGCGKT.

Belongs to the ABC transporter superfamily. Spermidine/putrescine importer (TC 3.A.1.11.1) family. In terms of assembly, the complex is composed of two ATP-binding proteins (PotA), two transmembrane proteins (PotB and PotC) and a solute-binding protein (PotD).

It localises to the cell inner membrane. It carries out the reaction ATP + H2O + polyamine-[polyamine-binding protein]Side 1 = ADP + phosphate + polyamineSide 2 + [polyamine-binding protein]Side 1.. Its function is as follows. Part of the ABC transporter complex PotABCD involved in spermidine/putrescine import. Responsible for energy coupling to the transport system. This Protochlamydia amoebophila (strain UWE25) protein is Spermidine/putrescine import ATP-binding protein PotA.